Reading from the N-terminus, the 369-residue chain is 3,7-dimethylxanthine N-methyltransferase TCS1 (369 aa).

Tyr24 is a binding site for S-adenosyl-L-homocysteine. Position 31 (Thr31) interacts with caffeine. Residues Cys66, Asn71, Asp103, Leu104, Ser138, and Phe139 each contribute to the S-adenosyl-L-homocysteine site. Tyr156, His159, and Trp160 together coordinate caffeine. Residue Asn177 coordinates Mg(2+). Arg225 serves as a coordination point for caffeine. Residues Asp263, Phe265, and Asn266 each contribute to the Mg(2+) site. Phe321 contributes to the caffeine binding site.

The protein belongs to the methyltransferase superfamily. Type-7 methyltransferase family. Mg(2+) serves as cofactor.

The enzyme catalyses 1,7-dimethylxanthine + S-adenosyl-L-methionine = caffeine + S-adenosyl-L-homocysteine + H(+). It carries out the reaction theobromine + S-adenosyl-L-methionine = caffeine + S-adenosyl-L-homocysteine + H(+). It catalyses the reaction 7-methylxanthine + S-adenosyl-L-methionine = theobromine + S-adenosyl-L-homocysteine + H(+). It functions in the pathway alkaloid biosynthesis. Involved in the biosynthesis of caffeine in cv. Puer. Involved in the biosynthesis of theacrine in cv. Kucha, a caffeine-like xanthine alkaloid with diverse beneficial biological activities including anti-depressive, sedative, and hypnotic activities, improving learning and memory, increasing exercise activity, and preventing nonalcoholic fatty liver disease. Catalyzes the conversion of 7-methylxanthine (7mX) to theobromine and of theobromine to caffeine. Has 3-N- and 1-N-methylation activity. The protein is 3,7-dimethylxanthine N-methyltransferase TCS1 of Camellia sinensis var. assamica (Assam tea).